A 530-amino-acid polypeptide reads, in one-letter code: Serendipity locus protein alpha (530 aa).

In terms of tissue distribution, transient expression in blastoderm from nuclear cycle 11 to the onset of gastrulation.

It is found in the cytoplasm. It localises to the cell membrane. Functionally, required for the cellularization of the syncytial blastoderm embryo. Involved in the localization of the actin filaments just prior to and during plasma membrane invagination. Sry-alpha together with nullo and bnk may provide auxiliary functions, by acting both to stabilize a large and dynamic microfilament structure and regulate its functions. This is Serendipity locus protein alpha (Sry-alpha) from Drosophila melanogaster (Fruit fly).